We begin with the raw amino-acid sequence, 104 residues long: Co-chaperonin GroES 2 (104 aa).

It belongs to the GroES chaperonin family. As to quaternary structure, heptamer of 7 subunits arranged in a ring. Interacts with the chaperonin GroEL.

Its subcellular location is the cytoplasm. Together with the chaperonin GroEL, plays an essential role in assisting protein folding. The GroEL-GroES system forms a nano-cage that allows encapsulation of the non-native substrate proteins and provides a physical environment optimized to promote and accelerate protein folding. GroES binds to the apical surface of the GroEL ring, thereby capping the opening of the GroEL channel. The chain is Co-chaperonin GroES 2 from Bradyrhizobium diazoefficiens (strain JCM 10833 / BCRC 13528 / IAM 13628 / NBRC 14792 / USDA 110).